We begin with the raw amino-acid sequence, 335 residues long: HTH-type transcriptional regulator MalR (335 aa).

Residues 1–55 (MNIKDIARLSGVGVSTVSRVINNHPDVKQSTREKVLQIIKDSNYIPNNSARILKQ) enclose the HTH lacI-type domain. Residues 3–22 (IKDIARLSGVGVSTVSRVIN) constitute a DNA-binding region (H-T-H motif).

Functionally, repressor of glucanotransferase gene expression. This is HTH-type transcriptional regulator MalR from Clostridium butyricum.